Here is a 199-residue protein sequence, read N- to C-terminus: Recombination protein RecR (199 aa).

The C4-type zinc-finger motif lies at 57-72; it reads CQSCRTFTEETYCPIC. The 96-residue stretch at 81-176 folds into the Toprim domain; sequence SVICVVETPA…AVSRIAHGVP (96 aa).

This sequence belongs to the RecR family.

May play a role in DNA repair. It seems to be involved in an RecBC-independent recombinational process of DNA repair. It may act with RecF and RecO. The protein is Recombination protein RecR of Shewanella piezotolerans (strain WP3 / JCM 13877).